The following is a 490-amino-acid chain: Cytochrome P450 2C55 (490 aa).

Position 435 (Cys435) interacts with heme.

Belongs to the cytochrome P450 family. Heme serves as cofactor.

It localises to the endoplasmic reticulum membrane. It is found in the microsome membrane. It carries out the reaction an organic molecule + reduced [NADPH--hemoprotein reductase] + O2 = an alcohol + oxidized [NADPH--hemoprotein reductase] + H2O + H(+). In terms of biological role, metabolizes arachidonic acid mainly to 19-hydroxyeicosatetraenoic acid (HETE). The polypeptide is Cytochrome P450 2C55 (Cyp2c55) (Rattus norvegicus (Rat)).